Here is a 114-residue protein sequence, read N- to C-terminus: Methylamine utilization protein MauL (114 aa).

Its pathway is one-carbon metabolism; methylamine degradation. Functionally, probably involved in TTQ prosthetic group biosynthesis. The protein is Methylamine utilization protein MauL (mauL) of Methylorubrum extorquens (strain ATCC 14718 / DSM 1338 / JCM 2805 / NCIMB 9133 / AM1) (Methylobacterium extorquens).